A 336-amino-acid polypeptide reads, in one-letter code: MINSKPILFSAIQPSGNLTIGNYIGTMRYWSSFQDDYECLYCIADLHSLTTLNKNFSLKKSILDTLALYLACGVNPKKSIIFIQSHVYQHSQLNWILSCFSSFGELSRMTQFKNKRKKEKNDIKNINIGLLNYPVLMSSDILLYQTNLVPVGQDQKQHLELTRNIANRFNFLYGDIFTLPNPLISKNGSKIMSLLDPTKKMSKSDTNKNNVIFLLENISSVFFKIKNAVTDSETPPKIYYDVKRKLGISNLLEILSAITNKEIFILEKEFDGIMYSEFKNIVFDNISKFLHKLQKSYLIYRKDESYLKNIAKEGAIKARLKSEKILKRVFSAVEID.

Residues Gln13 to Ser15 and Gly21 to Asn22 contribute to the ATP site. Positions Pro14–Asn22 match the 'HIGH' region motif. Asp140 is a binding site for L-tryptophan. Residues Gly152–Asp154, Ile191, and Lys200–Ser204 each bind ATP. A 'KMSKS' region motif is present at residues Lys200–Ser204.

Belongs to the class-I aminoacyl-tRNA synthetase family. As to quaternary structure, homodimer.

The protein resides in the cytoplasm. It catalyses the reaction tRNA(Trp) + L-tryptophan + ATP = L-tryptophyl-tRNA(Trp) + AMP + diphosphate + H(+). Its function is as follows. Catalyzes the attachment of tryptophan to tRNA(Trp). The protein is Tryptophan--tRNA ligase of Buchnera aphidicola subsp. Schizaphis graminum (strain Sg).